The sequence spans 34 residues: ECRYLFGGCKTTADCCKHLGCRTDLYYCAWDGTF.

3 disulfide bridges follow: C2/C16, C9/C21, and C15/C28. F34 carries the phenylalanine amide modification.

It belongs to the neurotoxin 10 (Hwtx-1) family. 09 (HaTx) subfamily. Expressed by the venom gland.

It is found in the secreted. Gating-modifier toxin that potently and selectively acts on Nav1.1/SCN1A and Nav1.3/SCN3A. It enhances hNav1.1/SCN1A currents and delays fast inactivation of the channel (EC(50)=11.6 nM), leading to a sustained current. Similar effects are observed at Nav1.3/SCN3A (EC(50)=11.8 nM), but with less sustained currents. When tested on Nav1.2/SCN2A, the native toxin decreases the peak current by 50% at saturating concentration, whereas the recombinant toxin only shows a weak decrease of peak current. The native toxin specifically activates the voltage-gated sodium channel Nav1.1/SCN1A in somatosensory neurons to elicit acute pain and mechanical allodynia. When tested on Nav1.1/SCN1A, the toxin induces a hyperpolarising shift of the voltage-dependence of steady-state activation, and induces a depolarizing shift in the voltage dependence of inactivation. In addition, it does not modify the recovery from fast inactivation in Nav1.1/SCN1A. The toxin hydrophobic face probably interacts with the domain IV voltage-sensor of Nav1.1/SCN1A and Nav1.3/SCN3A and may trap the voltage-sensing S4 helix in a partially activated state. In vivo, intracerebroventricular injection into mice elicits convulsions, spasms, tremors and rapid death. When injected into mouse hindpaw, the toxin elicits an immediate and robust response to pain. However, intraplantar injection of toxin does not cause neurogenic inflammation or alter sensitivity to heat, indicative of a modality-specific effect on mechanosensitive neurons. In Heteroscodra maculata (Togo starburst tarantula), this protein is Delta-theraphotoxin-Hm1b.